The chain runs to 334 residues: Putative ankyrin repeat protein RBE_0347 (334 aa).

4 ANK repeats span residues 80–90 (EQGINPNIQDS), 91–120 (SGNTLLLYACQSSLVEVVQFLLKKGANPNI), 124–161 (SDNTPLSKIISNRFIDKTEIYIAKLLLQNGALTELKDF), and 162–191 (VGFTPIQSATQYGHTEIVKSLIQNGADINV).

The sequence is that of Putative ankyrin repeat protein RBE_0347 from Rickettsia bellii (strain RML369-C).